The following is a 370-amino-acid chain: Putative phosphoserine aminotransferase (370 aa).

Residues 1–22 are disordered; the sequence is MAELTIPADLKPRDGRFGSGPS. R44 serves as a coordination point for L-glutamate. Residues F102, T148, D170, and Q193 each coordinate pyridoxal 5'-phosphate. K194 bears the N6-(pyridoxal phosphate)lysine mark. 245 to 246 contributes to the pyridoxal 5'-phosphate binding site; that stretch reads NT.

This sequence belongs to the class-V pyridoxal-phosphate-dependent aminotransferase family. SerC subfamily. As to quaternary structure, homodimer. Pyridoxal 5'-phosphate is required as a cofactor.

It is found in the cytoplasm. It carries out the reaction O-phospho-L-serine + 2-oxoglutarate = 3-phosphooxypyruvate + L-glutamate. The enzyme catalyses 4-(phosphooxy)-L-threonine + 2-oxoglutarate = (R)-3-hydroxy-2-oxo-4-phosphooxybutanoate + L-glutamate. It participates in amino-acid biosynthesis; L-serine biosynthesis; L-serine from 3-phospho-D-glycerate: step 2/3. It functions in the pathway cofactor biosynthesis; pyridoxine 5'-phosphate biosynthesis; pyridoxine 5'-phosphate from D-erythrose 4-phosphate: step 3/5. In terms of biological role, catalyzes the reversible conversion of 3-phosphohydroxypyruvate to phosphoserine and of 3-hydroxy-2-oxo-4-phosphonooxybutanoate to phosphohydroxythreonine. The sequence is that of Putative phosphoserine aminotransferase from Mycobacterium sp. (strain JLS).